Here is a 260-residue protein sequence, read N- to C-terminus: Lysozyme D (260 aa).

The first 19 residues, 1–19 (MRLLVTLILLIFVLTVSGQ), serve as a signal peptide directing secretion. Positions 83–148 (GSTTTGGTGS…SGGSSGSGSG (66 aa)) are disordered. 2 stretches are compositionally biased toward gly residues: residues 101-119 (SGSGSGSGSGSGSGSGSGT) and 129-147 (SGSGSGSSSGSGGSSGSGS).

It belongs to the dictyostelium lysozyme family. Post-translationally, contains disulfide bonds.

Its subcellular location is the cytoplasmic vesicle lumen. The catalysed reaction is Hydrolysis of (1-&gt;4)-beta-linkages between N-acetylmuramic acid and N-acetyl-D-glucosamine residues in a peptidoglycan and between N-acetyl-D-glucosamine residues in chitodextrins.. Has antibacterial activity. The protein is Lysozyme D (alyD-1) of Dictyostelium discoideum (Social amoeba).